The sequence spans 752 residues: Reticulon-1-B (752 aa).

4 disordered regions span residues 1–57 (MAAN…TSTD), 264–319 (EYPG…SEKQ), 334–424 (KAKE…SPSI), and 444–465 (ESCD…SPMM). Residues 264–273 (EYPGNQQGKS) are compositionally biased toward polar residues. The segment covering 334–361 (KAKEGTKRFSSETNDEKQSRSFHAEKQD) has biased composition (basic and acidic residues). Residues 363–383 (TVMSTEATSASHYTKASSAES) are compositionally biased toward polar residues. Positions 566 to 752 (AIDLLYWRDV…AKIPGTKQKE (187 aa)) constitute a Reticulon domain. A run of 2 helical transmembrane segments spans residues 580-600 (IVFG…VVSV) and 684-704 (VLMW…LLIM).

As to expression, isoform A and isoform C are both expressed in the animal hemisphere (presumptive neural ectoderm) of blastula and gastrula stage embryos, and along the anterior neural border, in the panplacodal primordium, and in the dorsolateral side of archenteron roof of late neurula embryos. At the tailbud stage, expression of the isoforms begin to differ. Isoform A localizes to the cranial placodes including the trigeminal placode, lateral line placode, olfactory placode and otic vesicle. Isoform C localizes to the central nervous system, including the spinal cord, prosencephalon, mesencephalon and rhombencephalon, as well as the lateral line placode, otic vesicle and pronephros.

The protein localises to the endoplasmic reticulum membrane. The protein resides in the nucleus. Inhibits amyloid precursor protein processing, probably by blocking BACE1 activity. The polypeptide is Reticulon-1-B (rtn1-b) (Xenopus laevis (African clawed frog)).